The sequence spans 140 residues: Phosphoribosyl-AMP cyclohydrolase (140 aa).

Aspartate 84 is a Mg(2+) binding site. Residue cysteine 85 coordinates Zn(2+). The Mg(2+) site is built by aspartate 86 and aspartate 88. Residues cysteine 101 and cysteine 108 each coordinate Zn(2+).

It belongs to the PRA-CH family. As to quaternary structure, homodimer. Mg(2+) is required as a cofactor. The cofactor is Zn(2+).

It is found in the cytoplasm. It carries out the reaction 1-(5-phospho-beta-D-ribosyl)-5'-AMP + H2O = 1-(5-phospho-beta-D-ribosyl)-5-[(5-phospho-beta-D-ribosylamino)methylideneamino]imidazole-4-carboxamide. It functions in the pathway amino-acid biosynthesis; L-histidine biosynthesis; L-histidine from 5-phospho-alpha-D-ribose 1-diphosphate: step 3/9. In terms of biological role, catalyzes the hydrolysis of the adenine ring of phosphoribosyl-AMP. The protein is Phosphoribosyl-AMP cyclohydrolase of Chloroherpeton thalassium (strain ATCC 35110 / GB-78).